Here is a 482-residue protein sequence, read N- to C-terminus: ATP synthase subunit beta, chloroplastic (482 aa).

An ATP-binding site is contributed by 168 to 175 (GGAGVGKT).

The protein belongs to the ATPase alpha/beta chains family. As to quaternary structure, F-type ATPases have 2 components, CF(1) - the catalytic core - and CF(0) - the membrane proton channel. CF(1) has five subunits: alpha(3), beta(3), gamma(1), delta(1), epsilon(1). CF(0) has four main subunits: a(1), b(1), b'(1) and c(9-12).

It is found in the plastid. Its subcellular location is the chloroplast thylakoid membrane. It carries out the reaction ATP + H2O + 4 H(+)(in) = ADP + phosphate + 5 H(+)(out). Produces ATP from ADP in the presence of a proton gradient across the membrane. The catalytic sites are hosted primarily by the beta subunits. The sequence is that of ATP synthase subunit beta, chloroplastic from Gnetum parvifolium (Small-leaved jointfir).